A 96-amino-acid chain; its full sequence is CRISPR-associated endoribonuclease Cas2 1 (96 aa).

Asp-8 contacts Mg(2+).

It belongs to the CRISPR-associated endoribonuclease Cas2 protein family. As to quaternary structure, homodimer, forms a heterotetramer with a Cas1 homodimer. The cofactor is Mg(2+).

CRISPR (clustered regularly interspaced short palindromic repeat), is an adaptive immune system that provides protection against mobile genetic elements (viruses, transposable elements and conjugative plasmids). CRISPR clusters contain sequences complementary to antecedent mobile elements and target invading nucleic acids. CRISPR clusters are transcribed and processed into CRISPR RNA (crRNA). Functions as a ssRNA-specific endoribonuclease. Involved in the integration of spacer DNA into the CRISPR cassette. The sequence is that of CRISPR-associated endoribonuclease Cas2 1 from Moorella thermoacetica (strain ATCC 39073 / JCM 9320).